A 504-amino-acid chain; its full sequence is Maturase K (504 aa).

Belongs to the intron maturase 2 family. MatK subfamily.

The protein localises to the plastid. The protein resides in the chloroplast. In terms of biological role, usually encoded in the trnK tRNA gene intron. Probably assists in splicing its own and other chloroplast group II introns. The protein is Maturase K of Calyptranthes pallens (Spicewood).